We begin with the raw amino-acid sequence, 73 residues long: Sec-independent protein translocase protein TatA (73 aa).

A helical membrane pass occupies residues 1-21 (MGSFSIWHWVIVLVVVVLIFG). A disordered region spans residues 43–73 (MKSEGEDAAQTPPAAQKEGGRVIDAEPADKK). The segment covering 60-73 (EGGRVIDAEPADKK) has biased composition (basic and acidic residues).

It belongs to the TatA/E family. The Tat system comprises two distinct complexes: a TatABC complex, containing multiple copies of TatA, TatB and TatC subunits, and a separate TatA complex, containing only TatA subunits. Substrates initially bind to the TatABC complex, which probably triggers association of the separate TatA complex to form the active translocon.

It is found in the cell inner membrane. Functionally, part of the twin-arginine translocation (Tat) system that transports large folded proteins containing a characteristic twin-arginine motif in their signal peptide across membranes. TatA could form the protein-conducting channel of the Tat system. The chain is Sec-independent protein translocase protein TatA from Laribacter hongkongensis (strain HLHK9).